The following is a 200-amino-acid chain: Nucleoside triphosphate pyrophosphatase (200 aa).

The active-site Proton acceptor is the D79.

The protein belongs to the Maf family. The cofactor is a divalent metal cation.

Its subcellular location is the cytoplasm. It catalyses the reaction a ribonucleoside 5'-triphosphate + H2O = a ribonucleoside 5'-phosphate + diphosphate + H(+). The enzyme catalyses a 2'-deoxyribonucleoside 5'-triphosphate + H2O = a 2'-deoxyribonucleoside 5'-phosphate + diphosphate + H(+). In terms of biological role, nucleoside triphosphate pyrophosphatase. May have a dual role in cell division arrest and in preventing the incorporation of modified nucleotides into cellular nucleic acids. The polypeptide is Nucleoside triphosphate pyrophosphatase (Legionella pneumophila (strain Paris)).